Consider the following 534-residue polypeptide: CTP synthase (534 aa).

Residues 1 to 267 (MTKYIFVTGG…DQIVCDHLKL (267 aa)) are amidoligase domain. Ser13 lines the CTP pocket. A UTP-binding site is contributed by Ser13. 14-19 (SIGKGI) lines the ATP pocket. Tyr54 serves as a coordination point for L-glutamine. Asp71 is a binding site for ATP. The Mg(2+) site is built by Asp71 and Glu141. CTP contacts are provided by residues 148 to 150 (DIE), 188 to 193 (KTKPTQ), and Lys224. UTP-binding positions include 188–193 (KTKPTQ) and Lys224. 240–242 (RDV) provides a ligand contact to ATP. Residues 292-534 (KIALVGKYVE…FVTAAIKNSN (243 aa)) enclose the Glutamine amidotransferase type-1 domain. Residue Gly354 participates in L-glutamine binding. The Nucleophile; for glutamine hydrolysis role is filled by Cys381. Residues 382–385 (LGMQ), Glu405, and Arg463 contribute to the L-glutamine site. Catalysis depends on residues His508 and Glu510.

It belongs to the CTP synthase family. In terms of assembly, homotetramer.

The enzyme catalyses UTP + L-glutamine + ATP + H2O = CTP + L-glutamate + ADP + phosphate + 2 H(+). It catalyses the reaction L-glutamine + H2O = L-glutamate + NH4(+). It carries out the reaction UTP + NH4(+) + ATP = CTP + ADP + phosphate + 2 H(+). It participates in pyrimidine metabolism; CTP biosynthesis via de novo pathway; CTP from UDP: step 2/2. Its activity is regulated as follows. Allosterically activated by GTP, when glutamine is the substrate; GTP has no effect on the reaction when ammonia is the substrate. The allosteric effector GTP functions by stabilizing the protein conformation that binds the tetrahedral intermediate(s) formed during glutamine hydrolysis. Inhibited by the product CTP, via allosteric rather than competitive inhibition. In terms of biological role, catalyzes the ATP-dependent amination of UTP to CTP with either L-glutamine or ammonia as the source of nitrogen. Regulates intracellular CTP levels through interactions with the four ribonucleotide triphosphates. The protein is CTP synthase of Streptococcus pyogenes serotype M2 (strain MGAS10270).